A 199-amino-acid chain; its full sequence is Glycerol-3-phosphate acyltransferase (199 aa).

A run of 5 helical transmembrane segments spans residues 4 to 24 (FALF…AILI), 56 to 76 (LAVL…GYYL), 80 to 100 (QFEL…PIFF), 115 to 135 (IAPI…FVFL), and 154 to 176 (YVWW…LIYR).

Belongs to the PlsY family. As to quaternary structure, probably interacts with PlsX.

The protein localises to the cell inner membrane. It catalyses the reaction an acyl phosphate + sn-glycerol 3-phosphate = a 1-acyl-sn-glycero-3-phosphate + phosphate. Its pathway is lipid metabolism; phospholipid metabolism. Functionally, catalyzes the transfer of an acyl group from acyl-phosphate (acyl-PO(4)) to glycerol-3-phosphate (G3P) to form lysophosphatidic acid (LPA). This enzyme utilizes acyl-phosphate as fatty acyl donor, but not acyl-CoA or acyl-ACP. This is Glycerol-3-phosphate acyltransferase from Haemophilus influenzae (strain PittEE).